A 254-amino-acid chain; its full sequence is Peptide methionine sulfoxide reductase A5 (254 aa).

An N-terminal signal peptide occupies residues methionine 1 to serine 33.

The protein belongs to the MsrA Met sulfoxide reductase family.

It carries out the reaction L-methionyl-[protein] + [thioredoxin]-disulfide + H2O = L-methionyl-(S)-S-oxide-[protein] + [thioredoxin]-dithiol. The enzyme catalyses [thioredoxin]-disulfide + L-methionine + H2O = L-methionine (S)-S-oxide + [thioredoxin]-dithiol. Its function is as follows. Catalyzes the reduction of methionine sulfoxide (MetSO) to methionine in proteins. Plays a protective role against oxidative stress by restoring activity to proteins that have been inactivated by methionine oxidation. MSRA family specifically reduces the MetSO S-enantiomer. In Arabidopsis thaliana (Mouse-ear cress), this protein is Peptide methionine sulfoxide reductase A5 (MSRA5).